We begin with the raw amino-acid sequence, 154 residues long: Endoribonuclease YbeY (154 aa).

His-114, His-118, and His-124 together coordinate Zn(2+).

This sequence belongs to the endoribonuclease YbeY family. Zn(2+) is required as a cofactor.

The protein localises to the cytoplasm. Functionally, single strand-specific metallo-endoribonuclease involved in late-stage 70S ribosome quality control and in maturation of the 3' terminus of the 16S rRNA. This Haemophilus influenzae (strain ATCC 51907 / DSM 11121 / KW20 / Rd) protein is Endoribonuclease YbeY.